The primary structure comprises 95 residues: MRTLSLLTLLALAALCLSDLTDATPTGPESDKAFMSKQEGNKVVNRLRRYLGASVPSPDPLEPTRELCELDPACDELSNQYGLKTAYRRIYGITI.

The signal sequence occupies residues 1–23; the sequence is MRTLSLLTLLALAALCLSDLTDA. Residues 24–49 constitute a propeptide that is removed on maturation; the sequence is TPTGPESDKAFMSKQEGNKVVNRLRR. Positions 46-92 constitute a Gla domain; that stretch reads RLRRYLGASVPSPDPLEPTRELCELDPACDELSNQYGLKTAYRRIYG. Ca(2+) contacts are provided by Glu-62, Glu-66, Glu-69, and Asp-75. Residues Glu-66 and Glu-69 each carry the 4-carboxyglutamate modification. A disulfide bond links Cys-68 and Cys-74.

The protein belongs to the osteocalcin/matrix Gla protein family. In terms of processing, gamma-carboxyglutamic acid residues are formed by vitamin K dependent carboxylation. These residues are essential for the binding of calcium. In terms of tissue distribution, expressed in kidney and lung, but not in bone.

The protein resides in the secreted. Binds strongly to apatite and calcium. The polypeptide is Osteocalcin-related protein (Mus musculus (Mouse)).